The chain runs to 388 residues: Leucine aminopeptidase 1 (388 aa).

The N-terminal stretch at 1-19 (MRVLAAIALGATGLRGALA) is a signal peptide. Residues 20 to 88 (AVVPQEVLGT…YPTLNSASYV (69 aa)) constitute a propeptide that is removed on maturation. N-linked (GlcNAc...) asparagine glycans are attached at residues N106 and N180. The Zn(2+) site is built by H188 and D207. Residue N232 is glycosylated (N-linked (GlcNAc...) asparagine). 2 residues coordinate Zn(2+): E246 and D273. A disulfide bridge links C322 with C326. A Zn(2+)-binding site is contributed by H355.

The protein belongs to the peptidase M28 family. M28E subfamily. As to quaternary structure, monomer. It depends on Zn(2+) as a cofactor.

It is found in the secreted. Its function is as follows. Extracellular aminopeptidase that allows assimilation of proteinaceous substrates. The polypeptide is Leucine aminopeptidase 1 (lap1) (Aspergillus clavatus (strain ATCC 1007 / CBS 513.65 / DSM 816 / NCTC 3887 / NRRL 1 / QM 1276 / 107)).